Consider the following 878-residue polypeptide: Alanine--tRNA ligase (878 aa).

Residues His571, His575, Cys673, and His677 each coordinate Zn(2+).

Belongs to the class-II aminoacyl-tRNA synthetase family. It depends on Zn(2+) as a cofactor.

The protein localises to the cytoplasm. The catalysed reaction is tRNA(Ala) + L-alanine + ATP = L-alanyl-tRNA(Ala) + AMP + diphosphate. Its function is as follows. Catalyzes the attachment of alanine to tRNA(Ala) in a two-step reaction: alanine is first activated by ATP to form Ala-AMP and then transferred to the acceptor end of tRNA(Ala). Also edits incorrectly charged Ser-tRNA(Ala) and Gly-tRNA(Ala) via its editing domain. This Syntrophus aciditrophicus (strain SB) protein is Alanine--tRNA ligase.